We begin with the raw amino-acid sequence, 592 residues long: Aspartate--tRNA ligase (592 aa).

Glu-173 contributes to the L-aspartate binding site. Residues 197–200 (QLFK) form an aspartate region. Arg-219 is a binding site for L-aspartate. ATP-binding positions include 219 to 221 (RDE) and Gln-228. An L-aspartate-binding site is contributed by His-448. Glu-482 contacts ATP. An L-aspartate-binding site is contributed by Arg-489. An ATP-binding site is contributed by 534–537 (GLDR).

This sequence belongs to the class-II aminoacyl-tRNA synthetase family. Type 1 subfamily. In terms of assembly, homodimer.

It localises to the cytoplasm. It carries out the reaction tRNA(Asp) + L-aspartate + ATP = L-aspartyl-tRNA(Asp) + AMP + diphosphate. Its function is as follows. Catalyzes the attachment of L-aspartate to tRNA(Asp) in a two-step reaction: L-aspartate is first activated by ATP to form Asp-AMP and then transferred to the acceptor end of tRNA(Asp). This is Aspartate--tRNA ligase from Shewanella baltica (strain OS155 / ATCC BAA-1091).